The primary structure comprises 874 residues: Alanine--tRNA ligase (874 aa).

Residues histidine 563, histidine 567, cysteine 665, and histidine 669 each contribute to the Zn(2+) site.

The protein belongs to the class-II aminoacyl-tRNA synthetase family. Zn(2+) serves as cofactor.

Its subcellular location is the cytoplasm. It catalyses the reaction tRNA(Ala) + L-alanine + ATP = L-alanyl-tRNA(Ala) + AMP + diphosphate. In terms of biological role, catalyzes the attachment of alanine to tRNA(Ala) in a two-step reaction: alanine is first activated by ATP to form Ala-AMP and then transferred to the acceptor end of tRNA(Ala). Also edits incorrectly charged Ser-tRNA(Ala) and Gly-tRNA(Ala) via its editing domain. This chain is Alanine--tRNA ligase, found in Actinobacillus pleuropneumoniae serotype 3 (strain JL03).